A 541-amino-acid polypeptide reads, in one-letter code: MDTQRNILLLALALVSFLLFQQWQVETNPQQPATVSTVQQTHKNGDVPTSSTANSDAPVDSAQSDKLITITTDVLTLKVDTLGGDIIESVLNKYDAELDSKAKFVLLKNDADHSYIAQSGLIGPQGIDSNTGRAQFTAKKTDYVLADGQNELRIPLTLEKNGITYTKTLIVKRDSYAIDVEYTVNNQSSAPATVEMYANLKQNLLDDGGSLTMPTYRGGAYSTEDTRYKKYSFDDMEDKNLSIDMTNGQGWAGMLQHYFASAWIPRNVNDATLTTRVAGDYGYIGVRMPSVTIPAGQEDTLTATLWTGPKLQPQMAATAKYLDLSVDYGWLWFIASPLHKLLSFIQSIVGNWGLAIMILTFIVRGAMYPLTKAQYTSMAKMRMLQPKLAAMRERIGDDRQRMSQEMMELYKKEKVNPLGGCLPIVLQMPIFISLYWALMESVELRHAPFFGWITDLSAQDPYYILPLLMGASMFLIQKMSPTTVTDPMQQKIMTFIPVMFTVFFLWFPAGLVLYWLVSNVVTLIQQTLIYRALEKKGLHSK.

Residues 7-27 form a helical membrane-spanning segment; it reads ILLLALALVSFLLFQQWQVET. Over residues 34-55 the composition is skewed to polar residues; it reads TVSTVQQTHKNGDVPTSSTANS. The tract at residues 34 to 59 is disordered; sequence TVSTVQQTHKNGDVPTSSTANSDAPV. Transmembrane regions (helical) follow at residues 343–363, 418–438, 456–476, and 495–515; these read SFIQSIVGNWGLAIMILTFIV, LGGCLPIVLQMPIFISLYWAL, LSAQDPYYILPLLMGASMFLI, and FIPVMFTVFFLWFPAGLVLYW.

This sequence belongs to the OXA1/ALB3/YidC family. Type 1 subfamily. As to quaternary structure, interacts with the Sec translocase complex via SecD. Specifically interacts with transmembrane segments of nascent integral membrane proteins during membrane integration.

The protein resides in the cell inner membrane. Its function is as follows. Required for the insertion and/or proper folding and/or complex formation of integral membrane proteins into the membrane. Involved in integration of membrane proteins that insert both dependently and independently of the Sec translocase complex, as well as at least some lipoproteins. Aids folding of multispanning membrane proteins. This is Membrane protein insertase YidC from Aliivibrio salmonicida (strain LFI1238) (Vibrio salmonicida (strain LFI1238)).